A 623-amino-acid chain; its full sequence is Xaa-Pro aminopeptidase 1 (623 aa).

An a peptide-binding site is contributed by arginine 77. Lysine 304 carries the N6-acetyllysine modification. Residue histidine 395 participates in a peptide binding. Mn(2+) contacts are provided by aspartate 415, aspartate 426, and histidine 489. 3 residues coordinate a peptide: histidine 489, histidine 498, and glutamate 523. Residues glutamate 523 and glutamate 537 each contribute to the Mn(2+) site.

The protein belongs to the peptidase M24B family. As to quaternary structure, homodimer. It depends on Mn(2+) as a cofactor. As to expression, expressed in all tissues tested, including pancreas, heart, muscle, kidney, liver, lung and brain. Highest levels in pancreas.

The protein resides in the cytoplasm. It is found in the cytosol. The catalysed reaction is Release of any N-terminal amino acid, including proline, that is linked to proline, even from a dipeptide or tripeptide.. Its activity is regulated as follows. Inhibited by apstatin and the metal ion chelators EDTA and 1,10-phenanthroline. Partially inhibited by dithiothreitol. Not inhibited by enalaprilat or amastatin. Specifically inhibited by the pseudodipeptide CQ31. Inhibition by CQ31 indirectly activates the CARD8 inflammasome: dipeptide accumulation following PEPD inactivation weaky inhibit dipeptidyl peptidases DDP8 and DPP9, relieving DPP8- and/or DPP9-mediated inhibition of CARD8. In terms of biological role, metalloaminopeptidase that catalyzes the removal of a penultimate prolyl residue from the N-termini of peptides, such as Arg-Pro-Pro. Contributes to the degradation of bradykinin. This is Xaa-Pro aminopeptidase 1 from Homo sapiens (Human).